Consider the following 5005-residue polypeptide: Bridge-like lipid transfer protein family member 1 (5005 aa).

Residues 27–47 traverse the membrane as a helical segment; that stretch reads VVWLLVATILSCGWIIYLTYY. Disordered stretches follow at residues 692–718 and 1205–1314; these read RPAQ…PSEL and KSVG…ASVC. The span at 708–718 shows a compositional bias: pro residues; sequence SPRPPVDPSEL. Positions 1205–1215 are enriched in basic and acidic residues; sequence KSVGIEGERKT. Positions 1226-1240 are enriched in low complexity; the sequence is SHSSSSSSEENSSSS. The span at 1248 to 1275 shows a compositional bias: basic and acidic residues; the sequence is GEKESPSSAADDHSVQKDLLHSARRDDG. Over residues 1278-1303 the composition is skewed to polar residues; sequence SVPTEISGTSPVSPNTQDKSVGQSPL. A phosphoserine mark is found at Ser1301, Ser1305, and Ser1323. Thr1325 carries the phosphothreonine modification. Disordered stretches follow at residues 1343 to 1376, 1399 to 1425, 1521 to 1544, and 1676 to 1698; these read SDVS…SNSF, EEFE…QMQQ, TNKR…SEES, and FSEN…MIGT. Phosphoserine is present on residues Ser1355 and Ser1406. The segment covering 1521-1530 has biased composition (basic residues); it reads TNKRTSKSSL. The span at 1684-1693 shows a compositional bias: basic and acidic residues; it reads QDIRGTKTEH. 2 positions are modified to phosphoserine: Ser1805 and Ser1808. Disordered stretches follow at residues 1927 to 1991, 2165 to 2192, 2265 to 2288, 2367 to 2387, 2400 to 2420, and 2598 to 2677; these read RGGV…PLMP, PAQP…GGLQ, TSGD…KESP, ESPV…PNLP, SSDQ…QDDV, and TAGS…KDVV. Polar residues-rich tracts occupy residues 1931–1948 and 1959–1971; these read LTSN…YNTD and TSPS…NSVS. 3 stretches are compositionally biased toward polar residues: residues 2367–2379, 2400–2418, and 2598–2608; these read ESPV…NSLP, SSDQ…TSQD, and TAGSASPTPTF. Ser2601 and Ser2603 each carry phosphoserine. Positions 2619–2638 are enriched in low complexity; the sequence is SDFSRSSRGSLNGGNRVNNA. Basic and acidic residues predominate over residues 2643-2665; sequence ANNENNKKESRNKNSLGRSERRT. The residue at position 2755 (Ser2755) is a Phosphoserine. Residues 2928-2967 are disordered; the sequence is RQPSTAPQPMKEDIATPLPSEKTPTSVNQTPIETNEFPQL. Residues 2949–2964 show a composition bias toward polar residues; it reads KTPTSVNQTPIETNEF. 3 positions are modified to phosphoserine: Ser3562, Glu3577, and Ser3653. Disordered stretches follow at residues 3614-3662, 3686-3744, 3821-3843, 3935-3954, 4089-4145, and 4325-4396; these read YSRS…TFNI, SSNS…ERFY, RRSY…KKFQ, KTNT…KGKG, TTYP…SSSS, and QSAS…ASQQ. Over residues 3686–3711 the composition is skewed to polar residues; the sequence is SSNSEGSCSVFSSPKTTGGFSPSVPF. A compositionally biased stretch (acidic residues) spans 3727 to 3736; that stretch reads EDSEKDEKDE. The span at 3821-3837 shows a compositional bias: basic and acidic residues; it reads RRSYDRSSRSLDQDSPS. Polar residues predominate over residues 4097–4112; sequence SPGSNAPQTGAKTSAS. A compositionally biased stretch (low complexity) spans 4117–4145; sequence PGSSGLGSPLGRSRHSSSQSDLTGSSSSS. Ser4124 is modified (phosphoserine). Positions 4325 to 4358 are enriched in polar residues; the sequence is QSASFTHMPQSPNVFNEHMTNNTMSPGTAAQSLK. Residues 4359–4372 show a composition bias toward low complexity; sequence SPASIRSRSVSDSS. Polar residues predominate over residues 4381-4396; the sequence is KTSTPVNKSNKAASQQ.

As to expression, highly expressed in testis and ovary. Weakly or not expressed in other tissues.

The protein localises to the cell membrane. Its subcellular location is the endoplasmic reticulum membrane. The protein resides in the mitochondrion membrane. Its function is as follows. Tube-forming lipid transport protein which provides phosphatidylethanolamine for glycosylphosphatidylinositol (GPI) anchor synthesis in the endoplasmic reticulum. Plays a role in endosomal trafficking and endosome recycling. Also involved in the actin cytoskeleton and cilia structural dynamics. Acts as a regulator of phagocytosis. This is Bridge-like lipid transfer protein family member 1 (Bltp1) from Mus musculus (Mouse).